The chain runs to 178 residues: Cytochrome c-type biogenesis protein CcmE (178 aa).

The Cytoplasmic segment spans residues 1–8 (MNPRRKKR). The chain crosses the membrane as a helical; Signal-anchor for type II membrane protein span at residues 9-29 (LAIVGSILIGIGVVSGLVLYA). The Periplasmic segment spans residues 30 to 178 (LSQNIDLFFT…QLESKKTNSY (149 aa)). Positions 143 and 147 each coordinate heme. Residues 154-178 (EAAGQKHDKATYSDKQLESKKTNSY) are disordered. Residues 157–178 (GQKHDKATYSDKQLESKKTNSY) are compositionally biased toward basic and acidic residues.

Belongs to the CcmE/CycJ family.

The protein localises to the cell inner membrane. Functionally, heme chaperone required for the biogenesis of c-type cytochromes. Transiently binds heme delivered by CcmC and transfers the heme to apo-cytochromes in a process facilitated by CcmF and CcmH. This Colwellia psychrerythraea (strain 34H / ATCC BAA-681) (Vibrio psychroerythus) protein is Cytochrome c-type biogenesis protein CcmE.